A 37-amino-acid chain; its full sequence is Large ribosomal subunit protein bL36c (37 aa).

It belongs to the bacterial ribosomal protein bL36 family.

It is found in the plastid. It localises to the chloroplast. This is Large ribosomal subunit protein bL36c from Tetradesmus obliquus (Green alga).